Consider the following 271-residue polypeptide: S-adenosylmethionine decarboxylase proenzyme (271 aa).

Residue Ser-121 is the Schiff-base intermediate with substrate; via pyruvic acid of the active site. Pyruvic acid (Ser); by autocatalysis is present on Ser-121. The active-site Proton acceptor; for processing activity is the His-126. Catalysis depends on Cys-149, which acts as the Proton donor; for catalytic activity.

The protein belongs to the prokaryotic AdoMetDC family. Type 2 subfamily. As to quaternary structure, heterooctamer of four alpha and four beta chains arranged as a tetramer of alpha/beta heterodimers. Pyruvate is required as a cofactor. Is synthesized initially as an inactive proenzyme. Formation of the active enzyme involves a self-maturation process in which the active site pyruvoyl group is generated from an internal serine residue via an autocatalytic post-translational modification. Two non-identical subunits are generated from the proenzyme in this reaction, and the pyruvate is formed at the N-terminus of the alpha chain, which is derived from the carboxyl end of the proenzyme. The post-translation cleavage follows an unusual pathway, termed non-hydrolytic serinolysis, in which the side chain hydroxyl group of the serine supplies its oxygen atom to form the C-terminus of the beta chain, while the remainder of the serine residue undergoes an oxidative deamination to produce ammonia and the pyruvoyl group blocking the N-terminus of the alpha chain.

It catalyses the reaction S-adenosyl-L-methionine + H(+) = S-adenosyl 3-(methylsulfanyl)propylamine + CO2. The protein operates within amine and polyamine biosynthesis; S-adenosylmethioninamine biosynthesis; S-adenosylmethioninamine from S-adenosyl-L-methionine: step 1/1. Catalyzes the decarboxylation of S-adenosylmethionine to S-adenosylmethioninamine (dcAdoMet), the propylamine donor required for the synthesis of the polyamines spermine and spermidine from the diamine putrescine. The chain is S-adenosylmethionine decarboxylase proenzyme from Clostridium beijerinckii (strain ATCC 51743 / NCIMB 8052) (Clostridium acetobutylicum).